Reading from the N-terminus, the 147-residue chain is Hemoglobin subunit delta (147 aa).

Positions 3 to 147 constitute a Globin domain; that stretch reads HLTPEEKTAV…VANALAHKYH (145 aa). Serine 51 is subject to Phosphoserine. Positions 64 and 93 each coordinate heme b.

It belongs to the globin family. As to quaternary structure, heterotetramer of two delta chains and two alpha chains. As to expression, red blood cells.

The sequence is that of Hemoglobin subunit delta (HBD) from Gorilla gorilla gorilla (Western lowland gorilla).